The primary structure comprises 136 residues: Riboflavin kinase (136 aa).

15 to 20 lines the CDP pocket; it reads GLGEGR. Thr44 and Asn46 together coordinate Mg(2+). Residues Thr103 and Glu111 each contribute to the FMN site. Position 116–119 (116–119) interacts with CDP; sequence YYLR.

It belongs to the archaeal riboflavin kinase family. Requires Mg(2+) as cofactor.

The catalysed reaction is riboflavin + CTP = CDP + FMN + H(+). Its pathway is cofactor biosynthesis; FMN biosynthesis; FMN from riboflavin (CTP route): step 1/1. In terms of biological role, catalyzes the CTP-dependent phosphorylation of riboflavin (vitamin B2) to form flavin mononucleotide (FMN). The polypeptide is Riboflavin kinase (Sulfurisphaera tokodaii (strain DSM 16993 / JCM 10545 / NBRC 100140 / 7) (Sulfolobus tokodaii)).